Consider the following 407-residue polypeptide: L-cysteine:1D-myo-inositol 2-amino-2-deoxy-alpha-D-glucopyranoside ligase (407 aa).

The disordered stretch occupies residues 1-22 (MRSWSAPDIVPLPGTGGPLRVH). Residue cysteine 43 coordinates Zn(2+). Residues 43 to 46 (CGIT), threonine 58, and 81 to 83 (NTT) each bind L-cysteinyl-5'-AMP. A 'HIGH' region motif is present at residues 45–55 (ITPYDAAHLGH). The short motif at 183–188 (ERGGDP) is the 'ERGGDP' region element. Tryptophan 223 is an L-cysteinyl-5'-AMP binding site. Cysteine 227 contributes to the Zn(2+) binding site. An L-cysteinyl-5'-AMP-binding site is contributed by 245–247 (GSD). Histidine 252 provides a ligand contact to Zn(2+). Valine 278 contributes to the L-cysteinyl-5'-AMP binding site. A 'KMSKS' region motif is present at residues 284 to 288 (KMSKS).

The protein belongs to the class-I aminoacyl-tRNA synthetase family. MshC subfamily. Monomer. Zn(2+) is required as a cofactor.

It carries out the reaction 1D-myo-inositol 2-amino-2-deoxy-alpha-D-glucopyranoside + L-cysteine + ATP = 1D-myo-inositol 2-(L-cysteinylamino)-2-deoxy-alpha-D-glucopyranoside + AMP + diphosphate + H(+). Its function is as follows. Catalyzes the ATP-dependent condensation of GlcN-Ins and L-cysteine to form L-Cys-GlcN-Ins. This Nocardiopsis dassonvillei (strain ATCC 23218 / DSM 43111 / CIP 107115 / JCM 7437 / KCTC 9190 / NBRC 14626 / NCTC 10488 / NRRL B-5397 / IMRU 509) (Actinomadura dassonvillei) protein is L-cysteine:1D-myo-inositol 2-amino-2-deoxy-alpha-D-glucopyranoside ligase.